Here is a 67-residue protein sequence, read N- to C-terminus: Alpha-toxin Tf3 (67 aa).

Residues 2 to 63 (KDGYPVEGDN…EPTKTNGRCK (62 aa)) form the LCN-type CS-alpha/beta domain. 4 cysteine pairs are disulfide-bonded: Cys12–Cys62, Cys16–Cys38, Cys24–Cys45, and Cys28–Cys47. At Pro64 the chain carries Proline amide.

The protein belongs to the long (4 C-C) scorpion toxin superfamily. Sodium channel inhibitor family. Alpha subfamily. Expressed by the venom gland.

It is found in the secreted. In terms of biological role, alpha toxins bind voltage-independently at site-3 of sodium channels (Nav) and inhibit the inactivation of the activated channels, thereby blocking neuronal transmission. The sequence is that of Alpha-toxin Tf3 from Tityus fasciolatus (Central Brazilian scorpion).